Consider the following 91-residue polypeptide: Non-specific lipid-transfer protein 1 (91 aa).

4 disulfide bridges follow: Cys-3/Cys-50, Cys-13/Cys-27, Cys-28/Cys-73, and Cys-48/Cys-87.

This sequence belongs to the plant LTP family.

Its function is as follows. Plant non-specific lipid-transfer proteins transfer phospholipids as well as galactolipids across membranes. May play a role in wax or cutin deposition in the cell walls of expanding epidermal cells and certain secretory tissues. In Prunus persica (Peach), this protein is Non-specific lipid-transfer protein 1.